We begin with the raw amino-acid sequence, 86 residues long: Defensin-like protein a (86 aa).

The first 23 residues, 1–23 (MRCSVLFVVSYVIMSLLISHVQG), serve as a signal peptide directing secretion. 4 disulfides stabilise this stretch: Cys-33/Cys-81, Cys-43/Cys-67, Cys-51/Cys-76, and Cys-65/Cys-78.

The protein belongs to the DEFL family. Expressed specifically in anthers.

The protein resides in the secreted. Involved in self-incompatibility. The polypeptide is Defensin-like protein a (SCRa) (Arabidopsis lyrata (Lyre-leaved rock-cress)).